The following is a 196-amino-acid chain: Zinc finger C2H2 protein ECU03_0940 (196 aa).

2 C2H2-type zinc fingers span residues 130–155 and 166–191; these read YACE…KEGH and YVCP…KHYH.

This is Zinc finger C2H2 protein ECU03_0940 from Encephalitozoon cuniculi (strain GB-M1) (Microsporidian parasite).